A 421-amino-acid polypeptide reads, in one-letter code: 4-methylaminobutanoate oxidase (methylamine-forming) (421 aa).

The FAD site is built by glutamate 31, arginine 33, arginine 39, and glutamate 379.

It belongs to the flavin monoamine oxidase family. As to quaternary structure, monomer. FAD is required as a cofactor.

It catalyses the reaction 4-(methylamino)butanoate + O2 + H2O = succinate semialdehyde + methylamine + H2O2. It participates in alkaloid degradation; nicotine degradation. Catalyzes the removal of methylamine from 4-methylaminobutanoate with the formation of succinate semialdehyde. Is involved in the catabolism of 4-methylaminobutanoate produced from nicotine. Has a very weak monoamine oxidase activity with 4-aminobutanoate. Cannot use spermidine, spermine, sarcosine, dimethylglycine, glycine, choline, betaine, alpha-methylamino isobutyrate, methylamine propionitrile and methylamino propylamine as substrate. This chain is 4-methylaminobutanoate oxidase (methylamine-forming) (mao), found in Paenarthrobacter nicotinovorans (Arthrobacter nicotinovorans).